The sequence spans 408 residues: UDP-N-acetylglucosamine--dolichyl-phosphate N-acetylglucosaminephosphotransferase (408 aa).

At Met-1–Pro-10 the chain is on the lumenal side. The helical transmembrane segment at Leu-11–Ala-38 threads the bilayer. Topologically, residues Ala-39–Gln-58 are cytoplasmic. UDP-N-acetyl-alpha-D-glucosamine is bound by residues Gln-44–Leu-46 and Glu-56. Residues Gly-59–Phe-78 traverse the membrane as a helical segment. The Lumenal portion of the chain corresponds to Leu-79–Pro-91. The helical transmembrane segment at His-92–Leu-118 threads the bilayer. Residues Asn-119–Arg-121 lie on the Cytoplasmic side of the membrane. Residues Trp-122–Asn-143 traverse the membrane as a helical segment. Lys-125 contributes to the dolichyl phosphate binding site. Over Phe-144 to Gly-166 the chain is Lumenal. Asn-146 is a glycosylation site (N-linked (GlcNAc...) asparagine). A helical transmembrane segment spans residues Ile-167 to Ile-186. Val-178–Ile-186 contributes to the dolichyl phosphate binding site. Asn-185 contributes to the Mg(2+) binding site. Topologically, residues Leu-187 to Gly-192 are cytoplasmic. Position 191 (Asn-191) interacts with UDP-N-acetyl-alpha-D-glucosamine. The chain crosses the membrane as a helical span at residues Leu-193–Leu-213. Topologically, residues Glu-214–Arg-218 are lumenal. Residues Asp-219–Asn-242 form a helical membrane-spanning segment. Residues Trp-243–Val-250 are Cytoplasmic-facing. The chain crosses the membrane as a helical span at residues Gly-251–Gly-269. Mg(2+) is bound at residue Asp-252. The Lumenal segment spans residues His-270–Phe-271. A helical transmembrane segment spans residues Ser-272 to Leu-293. Residues Leu-294–His-375 lie on the Cytoplasmic side of the membrane. Arg-301–Arg-303 contributes to the UDP-N-acetyl-alpha-D-glucosamine binding site. A helical transmembrane segment spans residues Glu-376 to Gln-400. At Leu-401–Val-408 the chain is on the lumenal side.

The protein belongs to the glycosyltransferase 4 family. In terms of assembly, homodimer. Mg(2+) is required as a cofactor.

The protein resides in the endoplasmic reticulum membrane. It carries out the reaction a di-trans,poly-cis-dolichyl phosphate + UDP-N-acetyl-alpha-D-glucosamine = an N-acetyl-alpha-D-glucosaminyl-diphospho-di-trans,poly-cis-dolichol + UMP. Its pathway is protein modification; protein glycosylation. With respect to regulation, inhibited by natural nucleoside antibiotic tunicamycin, which acts as a structural analog and competitor of UDP-GlcNAc. UDP-N-acetylglucosamine--dolichyl-phosphate N-acetylglucosaminephosphotransferase that operates in the biosynthetic pathway of dolichol-linked oligosaccharides, the glycan precursors employed in protein asparagine (N)-glycosylation. The assembly of dolichol-linked oligosaccharides begins on the cytosolic side of the endoplasmic reticulum membrane and finishes in its lumen. The sequential addition of sugars to dolichol pyrophosphate produces dolichol-linked oligosaccharides containing fourteen sugars, including two GlcNAcs, nine mannoses and three glucoses. Once assembled, the oligosaccharide is transferred from the lipid to nascent proteins by oligosaccharyltransferases. Catalyzes the initial step of dolichol-linked oligosaccharide biosynthesis, transfering GlcNAc-1-P from cytosolic UDP-GlcNAc onto the carrier lipid dolichyl phosphate (P-dolichol), yielding GlcNAc-P-P-dolichol embedded in the cytoplasmic leaflet of the endoplasmic reticulum membrane. In Cricetulus griseus (Chinese hamster), this protein is UDP-N-acetylglucosamine--dolichyl-phosphate N-acetylglucosaminephosphotransferase (DPAGT1).